The primary structure comprises 396 residues: Acetate kinase (396 aa).

Residue asparagine 8 participates in Mg(2+) binding. Lysine 15 contributes to the ATP binding site. Position 89 (arginine 89) interacts with substrate. The active-site Proton donor/acceptor is the aspartate 146. ATP-binding positions include 206 to 210, 280 to 282, and 328 to 332; these read HLGNG, DMR, and GVGEN. Glutamate 382 provides a ligand contact to Mg(2+).

This sequence belongs to the acetokinase family. Homodimer. Mg(2+) serves as cofactor. Requires Mn(2+) as cofactor.

Its subcellular location is the cytoplasm. The enzyme catalyses acetate + ATP = acetyl phosphate + ADP. The protein operates within metabolic intermediate biosynthesis; acetyl-CoA biosynthesis; acetyl-CoA from acetate: step 1/2. In terms of biological role, catalyzes the formation of acetyl phosphate from acetate and ATP. Can also catalyze the reverse reaction. In Clavibacter michiganensis subsp. michiganensis (strain NCPPB 382), this protein is Acetate kinase.